The primary structure comprises 93 residues: Large ribosomal subunit protein eL37A (93 aa).

Zn(2+) contacts are provided by Cys-19, Cys-22, Cys-34, and Cys-37. A C4-type zinc finger spans residues 19–37 (CRRCGRSSYHIQKSTCAQC).

This sequence belongs to the eukaryotic ribosomal protein eL37 family. Zn(2+) serves as cofactor.

Functionally, binds to the 23S rRNA. The protein is Large ribosomal subunit protein eL37A of Drosophila melanogaster (Fruit fly).